The following is a 360-amino-acid chain: MFVDSVEIIIASGKGGPGMVSFRREKFVIKGGPDGGDGGDGGDVYFEVDNNTDTLASFRGTKHHKAKNGAPGGTRNCAGKKGEDKIIVVPPGTQVFVGDKLWLDLITPKERVLALKGGKGGLGNAHFKSATKQQPTYAQKGLEGVEKCVRLELKLIADIGLVGFPNAGKSTLISTISNAKPKIANYEFTTLVPNLGVVSVDEKSEFLMADIPGIIEGASQGKGLGISFLKHIERTKVLAFVLDASRLDLGIKEQYQRLRLELEKFSPALANKPFGVLLNKCDVVENIDKMAKDFCAFLNLEAQKLEAFGLEPYLGFLHPHLTSDFENNPNEKSALFVLPLSAVSALNTHALKFVLLEALP.

Residues 1 to 156 enclose the Obg domain; it reads MFVDSVEIII…KCVRLELKLI (156 aa). The region spanning 157–360 is the OBG-type G domain; it reads ADIGLVGFPN…LKFVLLEALP (204 aa). Residues 163–170, 188–192, 210–213, 279–282, and 341–343 each bind GTP; these read GFPNAGKS, FTTLV, DIPG, NKCD, and SAV. Residues Ser-170 and Thr-190 each contribute to the Mg(2+) site.

It belongs to the TRAFAC class OBG-HflX-like GTPase superfamily. OBG GTPase family. Monomer. Mg(2+) serves as cofactor.

It is found in the cytoplasm. In terms of biological role, an essential GTPase which binds GTP, GDP and possibly (p)ppGpp with moderate affinity, with high nucleotide exchange rates and a fairly low GTP hydrolysis rate. Plays a role in control of the cell cycle, stress response, ribosome biogenesis and in those bacteria that undergo differentiation, in morphogenesis control. The chain is GTPase Obg from Helicobacter pylori (strain HPAG1).